Consider the following 313-residue polypeptide: 4-hydroxyproline 2-epimerase (313 aa).

A disordered region spans residues 1–23 (MHVIDSHTGGEPTRVILSGGPHL). Cys-85 functions as the Proton acceptor in the catalytic mechanism. Residues 86–87 (GH), His-205, and Asp-231 contribute to the substrate site. The active-site Proton donor is the Cys-235. 236-237 (GT) is a binding site for substrate.

The protein belongs to the proline racemase family.

The catalysed reaction is trans-4-hydroxy-L-proline = cis-4-hydroxy-D-proline. Functionally, catalyzes the epimerization of trans-4-hydroxy-L-proline (t4LHyp) to cis-4-hydroxy-D-proline (c4DHyp). Is likely involved in a degradation pathway that converts t4LHyp to alpha-ketoglutarate. Displays no proline racemase activity. This Ruegeria pomeroyi (strain ATCC 700808 / DSM 15171 / DSS-3) (Silicibacter pomeroyi) protein is 4-hydroxyproline 2-epimerase.